The following is a 201-amino-acid chain: Small ribosomal subunit protein uS4c (201 aa).

The segment at leucine 15–tyrosine 45 is disordered. Basic and acidic residues predominate over residues histidine 35 to tyrosine 45. In terms of domain architecture, S4 RNA-binding spans methionine 90–leucine 153.

It belongs to the universal ribosomal protein uS4 family. Part of the 30S ribosomal subunit. Contacts protein S5. The interaction surface between S4 and S5 is involved in control of translational fidelity.

The protein resides in the plastid. The protein localises to the chloroplast. Its function is as follows. One of the primary rRNA binding proteins, it binds directly to 16S rRNA where it nucleates assembly of the body of the 30S subunit. In terms of biological role, with S5 and S12 plays an important role in translational accuracy. This chain is Small ribosomal subunit protein uS4c (rps4), found in Pyropia yezoensis (Susabi-nori).